We begin with the raw amino-acid sequence, 85 residues long: Contulakin-Lt2 (85 aa).

A signal peptide spans Met1–Gly22. A propeptide spanning residues Arg23–Lys61 is cleaved from the precursor. Cys65 and Cys70 are disulfide-bonded. Residues Arg76–Lys85 constitute a propeptide that is removed on maturation.

Belongs to the conotoxin C superfamily. As to expression, expressed by the venom duct.

Its subcellular location is the secreted. Functionally, acts as an agonist of neurotensin receptors. It binds to human neurotensin type 1 receptor (NTSR1), rat neurotensin types 1 and 2 receptors (NTSR1/NTSR2) and mouse neurotensin type 3 receptor (SORT1). This Conus litteratus (Lettered cone) protein is Contulakin-Lt2.